The following is a 232-amino-acid chain: uncharacterized protein (232 aa).

This is an uncharacterized protein from Thermoproteus tenax (TTV1).